A 38-amino-acid polypeptide reads, in one-letter code: Photosystem II reaction center protein L (38 aa).

Residues 17 to 37 (GLYWGLLLIFVLAVLFSSYFF) form a helical membrane-spanning segment.

Belongs to the PsbL family. In terms of assembly, PSII is composed of 1 copy each of membrane proteins PsbA, PsbB, PsbC, PsbD, PsbE, PsbF, PsbH, PsbI, PsbJ, PsbK, PsbL, PsbM, PsbT, PsbX, PsbY, PsbZ, Psb30/Ycf12, at least 3 peripheral proteins of the oxygen-evolving complex and a large number of cofactors. It forms dimeric complexes.

It is found in the plastid. Its subcellular location is the chloroplast thylakoid membrane. Its function is as follows. One of the components of the core complex of photosystem II (PSII). PSII is a light-driven water:plastoquinone oxidoreductase that uses light energy to abstract electrons from H(2)O, generating O(2) and a proton gradient subsequently used for ATP formation. It consists of a core antenna complex that captures photons, and an electron transfer chain that converts photonic excitation into a charge separation. This subunit is found at the monomer-monomer interface and is required for correct PSII assembly and/or dimerization. In Staurastrum punctulatum (Green alga), this protein is Photosystem II reaction center protein L.